Here is a 690-residue protein sequence, read N- to C-terminus: Eukaryotic translation initiation factor 3 subunit B (690 aa).

The segment at 1 to 37 (MAKKKSEEQSSADANDSDYQEEPNFEDPPGFVDNISD) is disordered. The span at 15-25 (NDSDYQEEPNF) shows a compositional bias: acidic residues. Residues 57–141 (SVVVVDNIPK…HTFAVNLFTD (85 aa)) enclose the RRM domain. WD repeat units follow at residues 207–246 (TRER…KIQK), 293–331 (DGMS…LLDL), 334–369 (IKIP…TLME), 442–484 (EIRE…KPSL), and 530–575 (PDHF…IKRT). The stretch at 595-645 (EEKQKEIKKNLKKYYAAFEQKDRLRLTRASKELLEKRSQLRETFMEYRNKR) forms a coiled coil.

Belongs to the eIF-3 subunit B family. As to quaternary structure, component of the eukaryotic translation initiation factor 3 (eIF-3) complex. The eIF-3 complex interacts with pix. Interacts with mxt.

It localises to the cytoplasm. Functionally, RNA-binding component of the eukaryotic translation initiation factor 3 (eIF-3) complex, which is involved in protein synthesis of a specialized repertoire of mRNAs and, together with other initiation factors, stimulates binding of mRNA and methionyl-tRNAi to the 40S ribosome. The eIF-3 complex specifically targets and initiates translation of a subset of mRNAs involved in cell proliferation. The sequence is that of Eukaryotic translation initiation factor 3 subunit B from Drosophila sechellia (Fruit fly).